Here is a 309-residue protein sequence, read N- to C-terminus: Porphobilinogen deaminase (309 aa).

Cysteine 244 carries the post-translational modification S-(dipyrrolylmethanemethyl)cysteine.

It belongs to the HMBS family. In terms of assembly, monomer. The cofactor is dipyrromethane.

The enzyme catalyses 4 porphobilinogen + H2O = hydroxymethylbilane + 4 NH4(+). It functions in the pathway porphyrin-containing compound metabolism; protoporphyrin-IX biosynthesis; coproporphyrinogen-III from 5-aminolevulinate: step 2/4. Tetrapolymerization of the monopyrrole PBG into the hydroxymethylbilane pre-uroporphyrinogen in several discrete steps. This chain is Porphobilinogen deaminase, found in Listeria monocytogenes serotype 4b (strain CLIP80459).